The chain runs to 437 residues: ATP-dependent protease ATPase subunit HslU (437 aa).

Residues Val-18, 60–65 (GCGKTE), Asp-250, Glu-315, and Arg-387 contribute to the ATP site.

This sequence belongs to the ClpX chaperone family. HslU subfamily. A double ring-shaped homohexamer of HslV is capped on each side by a ring-shaped HslU homohexamer. The assembly of the HslU/HslV complex is dependent on binding of ATP.

The protein localises to the cytoplasm. In terms of biological role, ATPase subunit of a proteasome-like degradation complex; this subunit has chaperone activity. The binding of ATP and its subsequent hydrolysis by HslU are essential for unfolding of protein substrates subsequently hydrolyzed by HslV. HslU recognizes the N-terminal part of its protein substrates and unfolds these before they are guided to HslV for hydrolysis. The polypeptide is ATP-dependent protease ATPase subunit HslU (Methylobacterium nodulans (strain LMG 21967 / CNCM I-2342 / ORS 2060)).